The primary structure comprises 339 residues: GATA transcription factor 5 (339 aa).

Disordered stretches follow at residues Met68 to Asp88, Glu126 to Gly145, Pro163 to Pro206, and Glu221 to Leu242. Polar residues predominate over residues Glu126 to Pro136. The Nuclear localization signal signature appears at Lys167–Arg174. Over residues Ser181–Pro206 the composition is skewed to low complexity. The GATA-type zinc finger occupies Leu245 to Ser299. Positions Arg314 to Phe339 are disordered. Polar residues predominate over residues Asp321–Phe339.

The protein belongs to the type IV zinc-finger family. Class A subfamily.

It localises to the nucleus. Functionally, transcriptional activator that specifically binds 5'-GATA-3' or 5'-GAT-3' motifs within gene promoters. May be involved in the regulation of some light-responsive genes. The polypeptide is GATA transcription factor 5 (GATA5) (Arabidopsis thaliana (Mouse-ear cress)).